We begin with the raw amino-acid sequence, 314 residues long: Methionyl-tRNA formyltransferase (314 aa).

(6S)-5,6,7,8-tetrahydrofolate is bound at residue 112-115 (SLLP).

Belongs to the Fmt family.

It catalyses the reaction L-methionyl-tRNA(fMet) + (6R)-10-formyltetrahydrofolate = N-formyl-L-methionyl-tRNA(fMet) + (6S)-5,6,7,8-tetrahydrofolate + H(+). Attaches a formyl group to the free amino group of methionyl-tRNA(fMet). The formyl group appears to play a dual role in the initiator identity of N-formylmethionyl-tRNA by promoting its recognition by IF2 and preventing the misappropriation of this tRNA by the elongation apparatus. In Aeromonas hydrophila subsp. hydrophila (strain ATCC 7966 / DSM 30187 / BCRC 13018 / CCUG 14551 / JCM 1027 / KCTC 2358 / NCIMB 9240 / NCTC 8049), this protein is Methionyl-tRNA formyltransferase.